We begin with the raw amino-acid sequence, 234 residues long: Large ribosomal subunit protein uL1 (234 aa).

This sequence belongs to the universal ribosomal protein uL1 family. Part of the 50S ribosomal subunit.

Its function is as follows. Binds directly to 23S rRNA. The L1 stalk is quite mobile in the ribosome, and is involved in E site tRNA release. Functionally, protein L1 is also a translational repressor protein, it controls the translation of the L11 operon by binding to its mRNA. This chain is Large ribosomal subunit protein uL1, found in Serratia proteamaculans (strain 568).